We begin with the raw amino-acid sequence, 121 residues long: Regulator of ribonuclease activity B (121 aa).

It belongs to the RraB family. As to quaternary structure, interacts with the C-terminal region of Rne.

The protein resides in the cytoplasm. Its function is as follows. Globally modulates RNA abundance by binding to RNase E (Rne) and regulating its endonucleolytic activity. Can modulate Rne action in a substrate-dependent manner by altering the composition of the degradosome. The sequence is that of Regulator of ribonuclease activity B from Psychromonas ingrahamii (strain DSM 17664 / CCUG 51855 / 37).